We begin with the raw amino-acid sequence, 463 residues long: Protein DML1 (463 aa).

It belongs to the misato family.

The protein localises to the mitochondrion. Involved in the partitioning of the mitochondrial organelle and mitochondrial DNA (mtDNA) inheritance. This is Protein DML1 (DML1) from Debaryomyces hansenii (strain ATCC 36239 / CBS 767 / BCRC 21394 / JCM 1990 / NBRC 0083 / IGC 2968) (Yeast).